A 439-amino-acid polypeptide reads, in one-letter code: (p)ppApp synthetase toxin Tas1 (439 aa).

It localises to the secreted. The catalysed reaction is AMP + ATP = adenosine 3'-diphosphate,5'-phosphate + AMP + H(+). It carries out the reaction ADP + ATP = adenosine 3'-diphosphate,5'-diphosphate + AMP. It catalyses the reaction 2 ATP = adenosine 3'-diphosphate,5'-triphosphate + AMP. Type VI secretion exported toxin that pyrophosphorylates adenosine nucleotides to produce (p)ppApp. Thereby, depletes cellular ADP and ATP to dysregulate central metabolism in competitor cells. This Pseudomonas aeruginosa (strain UCBPP-PA14) protein is (p)ppApp synthetase toxin Tas1 (tas1).